Reading from the N-terminus, the 286-residue chain is UDP-3-O-acyl-N-acetylglucosamine deacetylase (286 aa).

Histidine 79, histidine 237, and aspartate 241 together coordinate Zn(2+). Histidine 264 acts as the Proton donor in catalysis.

Belongs to the LpxC family. It depends on Zn(2+) as a cofactor.

It carries out the reaction a UDP-3-O-[(3R)-3-hydroxyacyl]-N-acetyl-alpha-D-glucosamine + H2O = a UDP-3-O-[(3R)-3-hydroxyacyl]-alpha-D-glucosamine + acetate. It participates in glycolipid biosynthesis; lipid IV(A) biosynthesis; lipid IV(A) from (3R)-3-hydroxytetradecanoyl-[acyl-carrier-protein] and UDP-N-acetyl-alpha-D-glucosamine: step 2/6. Its function is as follows. Catalyzes the hydrolysis of UDP-3-O-myristoyl-N-acetylglucosamine to form UDP-3-O-myristoylglucosamine and acetate, the committed step in lipid A biosynthesis. The sequence is that of UDP-3-O-acyl-N-acetylglucosamine deacetylase from Chlamydia muridarum (strain MoPn / Nigg).